Here is a 274-residue protein sequence, read N- to C-terminus: 2,3,4,5-tetrahydropyridine-2,6-dicarboxylate N-succinyltransferase (274 aa).

The substrate site is built by R104 and D141.

This sequence belongs to the transferase hexapeptide repeat family. As to quaternary structure, homotrimer.

The protein localises to the cytoplasm. It catalyses the reaction (S)-2,3,4,5-tetrahydrodipicolinate + succinyl-CoA + H2O = (S)-2-succinylamino-6-oxoheptanedioate + CoA. Its pathway is amino-acid biosynthesis; L-lysine biosynthesis via DAP pathway; LL-2,6-diaminopimelate from (S)-tetrahydrodipicolinate (succinylase route): step 1/3. This is 2,3,4,5-tetrahydropyridine-2,6-dicarboxylate N-succinyltransferase from Idiomarina loihiensis (strain ATCC BAA-735 / DSM 15497 / L2-TR).